We begin with the raw amino-acid sequence, 634 residues long: MKMKLIQPFIQSIRFRIVGLLLLCLIPPTLGGIFLIDSYTGRQLKKIAEQDLQSRARLIIQLISRSDRERQQSTAFVASQPAIVEFNVEASQYFLNEFIKFHQWNGFFVVANQEGELVAGSDGANQEKGLPLKHWFEEVKDKNRHLNRLFPGKTYAESKDCLIVPIHSKNDQTQIGIVVECIPLPVIADFVQKILKDAELERILLVNYEGYIYADTDFKNYGVLENKKKSPLVNRLLNDQSGFVYSQGKFSYLSPVHLRGAKTWGLIVENSESDIQAAILNVNRIGYLLVLVIGGIVAYASWMVIHHSTVPILDLTKASQAIAAGDLDYEININQGNRQDEIGILGNSFIYMKNQIKTLIAQEVKDGVNRLELEKGRQIQQNFLPISLPDLQQWQINAVFEPARSVSGDFYDAFLLGDDYLAIVIGDVCDKGVGAAMFMGLFRSLLRVFSGETMPGDTCIRDVNYKCSANDGNGKKKVIVQFLNAVRLTNDYIATEHGDMAMFATLFFGVIDISNGNLSYINAGHEPVFILNSEGIKHRLKSTGPAVGMMPNSTFTIDSLKIDPGEMLIGYTDGVTDARSPTKEFFGRQRLMETLTANFSAKTEILDIIKQELIGHIDGSIQFDDITMIAVYRN.

One can recognise an HAMP domain in the interval 306–361 (HHSTVPILDLTKASQAIAAGDLDYEININQGNRQDEIGILGNSFIYMKNQIKTLIA). The region spanning 385-633 (PISLPDLQQW…DDITMIAVYR (249 aa)) is the PPM-type phosphatase domain.

Functionally, involved in cross-regulation of inorganic carbon and glucose metabolisms. This is Protein IcfG (icfG) from Synechocystis sp. (strain ATCC 27184 / PCC 6803 / Kazusa).